The sequence spans 303 residues: Polyisoprenyl-teichoic acid--peptidoglycan teichoic acid transferase TagU (303 aa).

Residues 1-6 are Cytoplasmic-facing; sequence MSKGKK. The chain crosses the membrane as a helical; Signal-anchor for type II membrane protein span at residues 7–27; that stretch reads IFAIIFGIILVLFLAVVGMGA. The Extracellular segment spans residues 28–303; that stretch reads KLYWDVSKSM…QELKNQLNTK (276 aa).

It belongs to the LytR/CpsA/Psr (LCP) family.

It is found in the cell membrane. It functions in the pathway cell wall biogenesis. In terms of biological role, may catalyze the final step in cell wall teichoic acid biosynthesis, the transfer of the anionic cell wall polymers (APs) from their lipid-linked precursor to the cell wall peptidoglycan (PG). The sequence is that of Polyisoprenyl-teichoic acid--peptidoglycan teichoic acid transferase TagU from Enterococcus faecalis (strain ATCC 700802 / V583).